Consider the following 302-residue polypeptide: Sulfate adenylyltransferase subunit 2 (302 aa).

Belongs to the PAPS reductase family. CysD subfamily. As to quaternary structure, heterodimer composed of CysD, the smaller subunit, and CysN.

The enzyme catalyses sulfate + ATP + H(+) = adenosine 5'-phosphosulfate + diphosphate. The protein operates within sulfur metabolism; hydrogen sulfide biosynthesis; sulfite from sulfate: step 1/3. Functionally, with CysN forms the ATP sulfurylase (ATPS) that catalyzes the adenylation of sulfate producing adenosine 5'-phosphosulfate (APS) and diphosphate, the first enzymatic step in sulfur assimilation pathway. APS synthesis involves the formation of a high-energy phosphoric-sulfuric acid anhydride bond driven by GTP hydrolysis by CysN coupled to ATP hydrolysis by CysD. This chain is Sulfate adenylyltransferase subunit 2, found in Escherichia coli O6:K15:H31 (strain 536 / UPEC).